The sequence spans 1154 residues: Caspase recruitment domain-containing protein 11 (1154 aa).

The CARD domain maps to 18 to 110 (EEDALWENVE…ELYKLVTGKE (93 aa)). A linker region spans residues 111–128 (PTRRFSTIVVEEGHEGLT). Residues 130–449 (FLMNEVIKLQ…KDSNNLDQSL (320 aa)) adopt a coiled-coil conformation. Phosphoserine is present on residues serine 448 and serine 466. Residues 450 to 666 (PRNLPVTIIS…GHVRGPGPSV (217 aa)) form an inhibitory domain (ID) region. A disordered region spans residues 460–626 (QDFGDASPRT…HSSSSSHQSE (167 aa)). Acidic residues predominate over residues 473–484 (EADDSSTSEESP). Serine 512 is modified (phosphoserine). Basic and acidic residues predominate over residues 518 to 529 (RTSDFQAKGHEE). The span at 534–562 (ASPSSCGSLPITNSFTKMQPPRSRSSIMS) shows a compositional bias: polar residues. Phosphoserine is present on serine 535. Serine 559 bears the Phosphoserine; by PKC/PRKCB and PKC/PRKCQ mark. The segment covering 573–587 (IVRRYKEDAPHRSTV) has biased composition (basic and acidic residues). Position 593 is a phosphoserine (serine 593). Over residues 614–625 (SSIHSSSSSHQS) the composition is skewed to low complexity. Serine 644 and serine 652 each carry phosphoserine; by PKC/PRKCB and PKC/PRKCQ. Positions 667 to 755 (QHTTLNGDSL…PVTLHYKVNH (89 aa)) constitute a PDZ domain. Serine 886 and serine 925 each carry phosphoserine. The region spanning 973-1140 (RRRPVLFTPT…LLRVVKDKIG (168 aa)) is the Guanylate kinase-like domain.

In terms of assembly, homodimer; disulfide-linked. Homomultimer; polymerizes following activation, forming a nucleating helical template that seeds BCL10-filament formation via a CARD-CARD interaction. Interacts (via CARD domain) with BCL10 (via CARD domain); interaction takes place following CARD11 activation and polymerization, leading to the formation of a filamentous CBM complex assembly. Component of a CBM complex (CARD11-BCL10-MALT1) complex involved in NF-kappa-B activation. Found in a membrane raft complex, at least composed of BCL10, CARD11, DPP4 and IKBKB. Interacts (via PDZ domain) with DPP4 (via cytoplasmic tail). Phosphorylation at Ser-559, Ser-644 and Ser-652 by PRKCB and PRKCQ leads to a shift from an inactive to an active form that activates the NF-kappa-B signaling. Detected in adult peripheral blood leukocytes, thymus, spleen and liver. Also found in promyelocytic leukemia HL-60 cells, chronic myelogenous leukemia K-562 cells, Burkitt's lymphoma Raji cells and colorectal adenocarcinoma SW480 cells. Not detected in HeLaS3, MOLT-4, A-549 and G431 cells.

It localises to the cytoplasm. The protein resides in the membrane raft. Maintained in an autoinhibited state via homodimerization in which the CARD domain forms an extensive interaction with the adjacent linker and coiled-coil regions. Activation downstream of T-cell receptor (TCR) by phosphorylation by PRKCB and PRKCQ triggers CARD11 homooligomerization and BCL10 recruitment, followed by activation of NF-kappa-B. Adapter protein that plays a key role in adaptive immune response by transducing the activation of NF-kappa-B downstream of T-cell receptor (TCR) and B-cell receptor (BCR) engagement. Transduces signals downstream TCR or BCR activation via the formation of a multiprotein complex together with BCL10 and MALT1 that induces NF-kappa-B and MAP kinase p38 (MAPK11, MAPK12, MAPK13 and/or MAPK14) pathways. Upon activation in response to TCR or BCR triggering, CARD11 homooligomerizes to form a nucleating helical template that recruits BCL10 via CARD-CARD interaction, thereby promoting polymerization of BCL10 and subsequent recruitment of MALT1: this leads to I-kappa-B kinase (IKK) phosphorylation and degradation, and release of NF-kappa-B proteins for nuclear translocation. Its binding to DPP4 induces T-cell proliferation and NF-kappa-B activation in a T-cell receptor/CD3-dependent manner. Promotes linear ubiquitination of BCL10 by promoting the targeting of BCL10 to RNF31/HOIP. Stimulates the phosphorylation of BCL10. Also activates the TORC1 signaling pathway. This is Caspase recruitment domain-containing protein 11 from Homo sapiens (Human).